The sequence spans 629 residues: tRNA uridine 5-carboxymethylaminomethyl modification enzyme MnmG (629 aa).

13 to 18 contacts FAD; that stretch reads GGGHAG. 273-287 is a binding site for NAD(+); it reads GPRYCPSIEDKINRF.

This sequence belongs to the MnmG family. Homodimer. Heterotetramer of two MnmE and two MnmG subunits. The cofactor is FAD.

The protein resides in the cytoplasm. In terms of biological role, NAD-binding protein involved in the addition of a carboxymethylaminomethyl (cmnm) group at the wobble position (U34) of certain tRNAs, forming tRNA-cmnm(5)s(2)U34. The protein is tRNA uridine 5-carboxymethylaminomethyl modification enzyme MnmG of Shewanella piezotolerans (strain WP3 / JCM 13877).